Consider the following 362-residue polypeptide: 3-dehydroquinate synthase (362 aa).

NAD(+)-binding positions include 70 to 75, 104 to 108, 128 to 129, K141, K150, and 168 to 171; these read DGEKYK, GVIGD, TT, and TLNT. Zn(2+) is bound by residues E183, H246, and H263.

It belongs to the sugar phosphate cyclases superfamily. Dehydroquinate synthase family. The cofactor is NAD(+). Co(2+) serves as cofactor. Zn(2+) is required as a cofactor.

The protein resides in the cytoplasm. The catalysed reaction is 7-phospho-2-dehydro-3-deoxy-D-arabino-heptonate = 3-dehydroquinate + phosphate. It functions in the pathway metabolic intermediate biosynthesis; chorismate biosynthesis; chorismate from D-erythrose 4-phosphate and phosphoenolpyruvate: step 2/7. Catalyzes the conversion of 3-deoxy-D-arabino-heptulosonate 7-phosphate (DAHP) to dehydroquinate (DHQ). This chain is 3-dehydroquinate synthase, found in Haemophilus influenzae (strain ATCC 51907 / DSM 11121 / KW20 / Rd).